The chain runs to 147 residues: Large ribosomal subunit protein uL16 (147 aa).

Belongs to the universal ribosomal protein uL16 family. In terms of assembly, part of the 50S ribosomal subunit.

Its function is as follows. Binds 23S rRNA and is also seen to make contacts with the A and possibly P site tRNAs. The chain is Large ribosomal subunit protein uL16 from Caldicellulosiruptor bescii (strain ATCC BAA-1888 / DSM 6725 / KCTC 15123 / Z-1320) (Anaerocellum thermophilum).